The chain runs to 296 residues: 2-dehydropantoate 2-reductase (296 aa).

NADP(+) contacts are provided by residues 7–12 (GPGAVG), N94, and A120. Substrate is bound at residue N94. Residue K175 is the Proton donor of the active site. Substrate contacts are provided by N179, N183, N193, and S245. Position 257 (E257) interacts with NADP(+).

This sequence belongs to the ketopantoate reductase family.

Its subcellular location is the cytoplasm. The enzyme catalyses (R)-pantoate + NADP(+) = 2-dehydropantoate + NADPH + H(+). It functions in the pathway cofactor biosynthesis; (R)-pantothenate biosynthesis; (R)-pantoate from 3-methyl-2-oxobutanoate: step 2/2. Functionally, catalyzes the NADPH-dependent reduction of ketopantoate into pantoic acid. This is 2-dehydropantoate 2-reductase (panE) from Vibrio cholerae serotype O1 (strain ATCC 39315 / El Tor Inaba N16961).